The following is a 327-amino-acid chain: DNA-directed RNA polymerase subunit alpha (327 aa).

An alpha N-terminal domain (alpha-NTD) region spans residues Met1 to Ser231. The alpha C-terminal domain (alpha-CTD) stretch occupies residues Asp247–Lys327.

This sequence belongs to the RNA polymerase alpha chain family. Homodimer. The RNAP catalytic core consists of 2 alpha, 1 beta, 1 beta' and 1 omega subunit. When a sigma factor is associated with the core the holoenzyme is formed, which can initiate transcription.

The enzyme catalyses RNA(n) + a ribonucleoside 5'-triphosphate = RNA(n+1) + diphosphate. Its function is as follows. DNA-dependent RNA polymerase catalyzes the transcription of DNA into RNA using the four ribonucleoside triphosphates as substrates. This is DNA-directed RNA polymerase subunit alpha from Chlorobium phaeobacteroides (strain DSM 266 / SMG 266 / 2430).